A 45-amino-acid chain; its full sequence is Small polypeptide DEVIL 2 (45 aa).

Positions 14–45 (SQSRRLGKYLKEQKGRIYIIRRCVMMLLCSHD) are required for DVL/RTFL small polypeptide activity. Residues 17–33 (RRLGKYLKEQKGRIYII) traverse the membrane as a helical segment.

The protein belongs to the DVL/RTFL small polypeptides family. In terms of tissue distribution, mostly expressed in stems and, to a lower extent, in roots and leaves.

The protein resides in the cell membrane. Small polypeptide acting as a regulatory molecule which coordinates cellular responses required for differentiation, growth and development, including leaves shape, pedicule elongation, inflorescence organization and fruit maturation, probably by restricting polar cell proliferation in lateral organs and coordinating socket cell recruitment and differentiation at trichome sites. This is Small polypeptide DEVIL 2 from Arabidopsis thaliana (Mouse-ear cress).